Reading from the N-terminus, the 333-residue chain is Probable tRNA pseudouridine synthase B (333 aa).

Catalysis depends on D66, which acts as the Nucleophile. Residues 233–308 (LKKIIVKDSA…EVVEITRVIM (76 aa)) form the PUA domain.

It belongs to the pseudouridine synthase TruB family. Type 2 subfamily.

The enzyme catalyses uridine(55) in tRNA = pseudouridine(55) in tRNA. Its function is as follows. Could be responsible for synthesis of pseudouridine from uracil-55 in the psi GC loop of transfer RNAs. The chain is Probable tRNA pseudouridine synthase B from Methanococcus maripaludis (strain C6 / ATCC BAA-1332).